We begin with the raw amino-acid sequence, 509 residues long: MDEYEAQLLVVKQALLVTSDEQQRDELIALQTNLEELLALTRGSEPEATSDTKTPETSDNIDDELQRFQSELIDLEHQQADPGEDQQRLEELRTKYNGLLGEKCSAPHEHSWGALSYHNALICGVDDELIVDKNGILDVRLRVLFTNPTHREMLPCNYFLEGECRFDEVRCRYSHGALVPGSSIKDYKAPDFHRLARNCSVLAKLQDRLWHRGRVLCVNFVEQQCRVRLDGQEHKERERDFPFEELFPLVTAEDDDLTSESEESNETDGSDAGNDSDMDDFEAARQARMVELSLFTFKPTERLGAWEQYTRGIGSKLMANMGYIHGTGLGSDGRGIVTPVSAQILPQGRSLDACMELREAANGDKDYFSVERKLKRAQRRQEAANEKAYERASKRTDVFAFLNTSVLGQGSQQTENANKKTKPNNLQQHSNKTLNVETVRIADDIRRKQRDIAKVQQSLARNATDAQLQKRLNVQLQAQKQELATLQAQETSLCKEQQTRKSKNKMFEF.

The disordered stretch occupies residues Thr41–Ile61. The span at Glu47–Ser58 shows a compositional bias: polar residues. A C3H1-type zinc finger spans residues Pro155–Leu178. Residues Asp254 to Met278 are disordered. A G-patch domain is found at Thr310–Glu356. Positions Gly410–Thr433 are disordered. Residues Pro423–Thr433 show a composition bias toward polar residues.

The protein resides in the nucleus. Transcription repressor. The sequence is that of Zinc finger CCCH-type with G patch domain-containing protein from Drosophila mojavensis (Fruit fly).